The primary structure comprises 328 residues: N-acyl-aromatic-L-amino acid amidohydrolase (carboxylate-forming) A (328 aa).

Positions 30 and 33 each coordinate Zn(2+). Substrate contacts are provided by residues Arg74 and 81-82 (NR). His127 contributes to the Zn(2+) binding site. Glu189 and Tyr300 together coordinate substrate.

Belongs to the AspA/AstE family. Aspartoacylase subfamily. Homotetramer. It depends on Zn(2+) as a cofactor.

The protein resides in the apical cell membrane. It is found in the cytoplasm. It catalyses the reaction an N-acyl-aromatic L-alpha-amino acid + H2O = an aromatic L-alpha-amino acid + a carboxylate. It carries out the reaction an N-acetyl-L-cysteine-S-conjugate + H2O = an S-substituted L-cysteine + acetate. In terms of biological role, plays an important role in deacetylating mercapturic acids in kidney proximal tubules. This Danio rerio (Zebrafish) protein is N-acyl-aromatic-L-amino acid amidohydrolase (carboxylate-forming) A (acy3.1).